The sequence spans 270 residues: Electron transfer flavoprotein subunit beta (270 aa).

It belongs to the ETF alpha-subunit/FixB family. Heterodimer of an alpha and a beta subunit. Requires FAD as cofactor.

In terms of biological role, the electron transfer flavoprotein serves as a specific electron acceptor for other dehydrogenases. It transfers the electrons to the main respiratory chain via ETF-ubiquinone oxidoreductase (ETF dehydrogenase). This chain is Electron transfer flavoprotein subunit beta (etfB), found in Megasphaera elsdenii.